Reading from the N-terminus, the 447-residue chain is GTPase Der (447 aa).

EngA-type G domains are found at residues 3 to 167 (PVIA…VQER) and 181 to 354 (VKIA…AAAM). Residues 9–16 (GRPNVGKS), 56–60 (DTGGF), 119–122 (NKAE), 187–194 (GRPNVGKS), 234–238 (DTAGL), and 299–302 (NKWD) contribute to the GTP site. The KH-like domain maps to 355–439 (VKLPTPQLTR…PLRIEFRTNK (85 aa)).

The protein belongs to the TRAFAC class TrmE-Era-EngA-EngB-Septin-like GTPase superfamily. EngA (Der) GTPase family. In terms of assembly, associates with the 50S ribosomal subunit.

Functionally, GTPase that plays an essential role in the late steps of ribosome biogenesis. In Cupriavidus taiwanensis (strain DSM 17343 / BCRC 17206 / CCUG 44338 / CIP 107171 / LMG 19424 / R1) (Ralstonia taiwanensis (strain LMG 19424)), this protein is GTPase Der.